The sequence spans 264 residues: uncharacterized protein (264 aa).

8-15 (IQGGTGKT) contacts ATP.

This is an uncharacterized protein from Methanocaldococcus jannaschii (strain ATCC 43067 / DSM 2661 / JAL-1 / JCM 10045 / NBRC 100440) (Methanococcus jannaschii).